We begin with the raw amino-acid sequence, 265 residues long: Translation initiation factor 2 subunit alpha (265 aa).

Residues glycine 12–lysine 83 form the S1 motif domain.

Belongs to the eIF-2-alpha family. As to quaternary structure, heterotrimer composed of an alpha, a beta and a gamma chain.

Its function is as follows. eIF-2 functions in the early steps of protein synthesis by forming a ternary complex with GTP and initiator tRNA. The polypeptide is Translation initiation factor 2 subunit alpha (Methanobrevibacter smithii (strain ATCC 35061 / DSM 861 / OCM 144 / PS)).